We begin with the raw amino-acid sequence, 62 residues long: DNA-directed RNA polymerase subunit Rpo10 (62 aa).

Zn(2+)-binding residues include Cys-6, Cys-9, Cys-43, and Cys-44.

Belongs to the archaeal Rpo10/eukaryotic RPB10 RNA polymerase subunit family. Part of the RNA polymerase complex. Requires Zn(2+) as cofactor.

The protein resides in the cytoplasm. The catalysed reaction is RNA(n) + a ribonucleoside 5'-triphosphate = RNA(n+1) + diphosphate. In terms of biological role, DNA-dependent RNA polymerase (RNAP) catalyzes the transcription of DNA into RNA using the four ribonucleoside triphosphates as substrates. This chain is DNA-directed RNA polymerase subunit Rpo10, found in Methanospirillum hungatei JF-1 (strain ATCC 27890 / DSM 864 / NBRC 100397 / JF-1).